A 192-amino-acid polypeptide reads, in one-letter code: Transmembrane protein 276 (192 aa).

A signal peptide spans 1 to 32 (MVSKPRNEWSTALSHLVLAGVSLHAAVSSVQS). A run of 4 helical transmembrane segments spans residues 35–55 (GAAAGFLLQTLAAVIMLAPEL), 63–83 (AGAWVATVIGLPLLAFDFHWV), 92–112 (LLLGGGMVLAVAGDHLGPEGC), and 114–134 (VAGQAVLLVVAVTILIVAVFT).

It localises to the membrane. The protein is Transmembrane protein 276 of Rattus norvegicus (Rat).